Here is a 519-residue protein sequence, read N- to C-terminus: Signal transduction histidine-protein kinase/phosphatase MprB (519 aa).

The Cytoplasmic segment spans residues 1-26 (MVRFAWRRRASLRATSSLSLRWRVML). A helical transmembrane segment spans residues 27 to 47 (LAMSMVAMVVVLMAFAVYVVI). Residues 48 to 163 (SAALYSDIDN…PTEAVMTKLR (116 aa)) lie on the Extracellular side of the membrane. The helical transmembrane segment at 164 to 184 (WVLLIVGSLGVAVAAVAGGMV) threads the bilayer. Over 185 to 519 (TRAGLRPVGR…SVDYQSARAR (335 aa)) the chain is Cytoplasmic. One can recognise an HAMP domain in the interval 186–238 (RAGLRPVGRLTEAAERVARTDDLRPIPVFGSDELARLTEAFNLMLRALAESRE). One can recognise a Histidine kinase domain in the interval 246-466 (DAGHELRTPL…SIYVLLPGRP (221 aa)). Phosphohistidine; by autocatalysis is present on His-249.

Mg(2+) is required as a cofactor. Requires Mn(2+) as cofactor. In terms of processing, autophosphorylated.

It is found in the cell membrane. It catalyses the reaction ATP + protein L-histidine = ADP + protein N-phospho-L-histidine.. Functionally, member of the two-component regulatory system MprB/MprA which contributes to maintaining a balance among several systems involved in stress resistance and is required for establishment and maintenance of persistent infection in the host. In response to environmental signals MprB acts both as a membrane-associated protein kinase that undergoes autophosphorylation and subsequently transfers the phosphate to MprA, and a protein phosphatase that dephosphorylates phospho-MprA. This is Signal transduction histidine-protein kinase/phosphatase MprB (mprB) from Mycobacterium leprae (strain TN).